We begin with the raw amino-acid sequence, 309 residues long: Glutaminase (309 aa).

Substrate is bound by residues Ser64, Asn114, Glu160, Asn167, Tyr191, Tyr243, and Val261.

It belongs to the glutaminase family. Homotetramer.

The catalysed reaction is L-glutamine + H2O = L-glutamate + NH4(+). The chain is Glutaminase from Methylorubrum populi (strain ATCC BAA-705 / NCIMB 13946 / BJ001) (Methylobacterium populi).